The primary structure comprises 69 residues: Toxin Lc a (69 aa).

4 cysteine pairs are disulfide-bonded: Cys-3–Cys-20, Cys-13–Cys-41, Cys-45–Cys-56, and Cys-57–Cys-62.

It belongs to the three-finger toxin family. Long-chain subfamily. Type II alpha-neurotoxin sub-subfamily. As to expression, expressed by the venom gland.

It is found in the secreted. In terms of biological role, binds with high affinity to muscular nicotinic acetylcholine receptors (nAChRs), whereas it binds with a low affinity to neuronal alpha-7/CHRNA7 nAChRs. This chain is Toxin Lc a, found in Laticauda colubrina (Yellow-lipped sea krait).